Consider the following 197-residue polypeptide: Endonuclease V (197 aa).

D37 and E101 together coordinate Mg(2+).

The protein belongs to the endonuclease V family. Mg(2+) is required as a cofactor.

It is found in the cytoplasm. It catalyses the reaction Endonucleolytic cleavage at apurinic or apyrimidinic sites to products with a 5'-phosphate.. In terms of biological role, DNA repair enzyme involved in the repair of deaminated bases. Selectively cleaves double-stranded DNA at the second phosphodiester bond 3' to a deoxyinosine leaving behind the intact lesion on the nicked DNA. This chain is Endonuclease V, found in Thermococcus kodakarensis (strain ATCC BAA-918 / JCM 12380 / KOD1) (Pyrococcus kodakaraensis (strain KOD1)).